The primary structure comprises 354 residues: uncharacterized protein (354 aa).

Disordered regions lie at residues 1 to 74 (MGTK…ENCR) and 87 to 115 (SESG…QRAS). The residue at position 19 (Lys19) is an N6-acetyllysine. Low complexity predominate over residues 32–41 (EGPSSNSSFH). Over residues 45-54 (EEGTDLEGDM) the composition is skewed to acidic residues. Ser115 and Ser174 each carry phosphoserine. Over residues 182–199 (QGSSQDLPMQANLSQSNE) the composition is skewed to polar residues. Disordered regions lie at residues 182 to 208 (QGSS…GRDR) and 235 to 298 (QVAD…DELS). The residue at position 291 (Tyr291) is a Phosphotyrosine. Residue Ser292 is modified to Phosphoserine.

This is an uncharacterized protein from Mus musculus (Mouse).